We begin with the raw amino-acid sequence, 181 residues long: ADP-ribosylation factor 1 (181 aa).

A lipid anchor (N-myristoyl glycine) is attached at glycine 2. The important for the stable binding to the membranes stretch occupies residues 3-16; the sequence is NMFANLFKGLFGKK. GTP contacts are provided by residues 24-32, 126-129, and alanine 160; these read GLDAAGKTT and NKQD.

The protein belongs to the small GTPase superfamily. Arf family.

It localises to the golgi apparatus membrane. It carries out the reaction GTP + H2O = GDP + phosphate + H(+). With respect to regulation, alternates between an inactive GDP-bound form and an active GTP-bound form. Activated by a guanine nucleotide-exchange factor (GEF) and inactivated by GTPase-activating protein (GAP). Its function is as follows. Small GTPase involved in protein trafficking between different compartments. Modulates vesicle budding and uncoating within the Golgi complex. In its GTP-bound form, triggers the recruitment of coatomer proteins to the Golgi membrane. The hydrolysis of ARF1-bound GTP, which is mediated by ARFGAPs proteins, is required for dissociation of coat proteins from Golgi membranes and vesicles. The protein is ADP-ribosylation factor 1 (arf1) of Xenopus laevis (African clawed frog).